A 486-amino-acid chain; its full sequence is Glutamyl-tRNA(Gln) amidotransferase subunit A (486 aa).

Residues K76 and S151 each act as charge relay system in the active site. Residue S175 is the Acyl-ester intermediate of the active site.

It belongs to the amidase family. GatA subfamily. In terms of assembly, heterotrimer of A, B and C subunits.

It carries out the reaction L-glutamyl-tRNA(Gln) + L-glutamine + ATP + H2O = L-glutaminyl-tRNA(Gln) + L-glutamate + ADP + phosphate + H(+). In terms of biological role, allows the formation of correctly charged Gln-tRNA(Gln) through the transamidation of misacylated Glu-tRNA(Gln) in organisms which lack glutaminyl-tRNA synthetase. The reaction takes place in the presence of glutamine and ATP through an activated gamma-phospho-Glu-tRNA(Gln). The chain is Glutamyl-tRNA(Gln) amidotransferase subunit A from Chromohalobacter salexigens (strain ATCC BAA-138 / DSM 3043 / CIP 106854 / NCIMB 13768 / 1H11).